A 20-amino-acid chain; its full sequence is Isocitrate dehydrogenase [NADP] (20 aa).

The protein belongs to the isocitrate and isopropylmalate dehydrogenases family. Mn(2+) is required as a cofactor. Requires Mg(2+) as cofactor.

Its subcellular location is the cytoplasm. The catalysed reaction is D-threo-isocitrate + NADP(+) = 2-oxoglutarate + CO2 + NADPH. This chain is Isocitrate dehydrogenase [NADP], found in Naegleria fowleri (Brain eating amoeba).